The chain runs to 384 residues: Na(+)/H(+) antiporter NhaA (384 aa).

The next 11 helical transmembrane spans lie at 7-27 (FYNL…LAII), 58-78 (LLLW…GLEI), 94-114 (LVPA…FIFF), 124-144 (GWAI…SLLG), 153-173 (ILLT…IALF), 179-199 (SLLS…LNYF), 204-224 (ISVF…SGVH), 256-276 (VVFL…FVGL), 285-305 (VVLG…FLSL), 325-345 (VYGI…IGSL), and 357-377 (MVKI…FLVL).

Belongs to the NhaA Na(+)/H(+) (TC 2.A.33) antiporter family.

Its subcellular location is the cell inner membrane. The enzyme catalyses Na(+)(in) + 2 H(+)(out) = Na(+)(out) + 2 H(+)(in). Na(+)/H(+) antiporter that extrudes sodium in exchange for external protons. This Legionella pneumophila (strain Corby) protein is Na(+)/H(+) antiporter NhaA.